The chain runs to 139 residues: Large ribosomal subunit protein bL21 (139 aa).

This sequence belongs to the bacterial ribosomal protein bL21 family. In terms of assembly, part of the 50S ribosomal subunit. Contacts protein L20.

This protein binds to 23S rRNA in the presence of protein L20. The chain is Large ribosomal subunit protein bL21 from Prochlorococcus marinus (strain NATL1A).